Reading from the N-terminus, the 341-residue chain is Ketol-acid reductoisomerase (NADP(+)) (341 aa).

One can recognise a KARI N-terminal Rossmann domain in the interval 1–182 (MTEMFYDDDA…GGTRAGVIKT (182 aa)). Residues 25 to 28 (YGSQ), K48, S51, S53, and 83 to 86 (DQHQ) each bind NADP(+). H108 is a catalytic residue. G134 contacts NADP(+). Residues 183–328 (TFTEETETDL…RELRSLFSWQ (146 aa)) enclose the KARI C-terminal knotted domain. Mg(2+) contacts are provided by D191, E195, E227, and E231. S252 provides a ligand contact to substrate.

This sequence belongs to the ketol-acid reductoisomerase family. It depends on Mg(2+) as a cofactor.

The catalysed reaction is (2R)-2,3-dihydroxy-3-methylbutanoate + NADP(+) = (2S)-2-acetolactate + NADPH + H(+). It catalyses the reaction (2R,3R)-2,3-dihydroxy-3-methylpentanoate + NADP(+) = (S)-2-ethyl-2-hydroxy-3-oxobutanoate + NADPH + H(+). Its pathway is amino-acid biosynthesis; L-isoleucine biosynthesis; L-isoleucine from 2-oxobutanoate: step 2/4. It participates in amino-acid biosynthesis; L-valine biosynthesis; L-valine from pyruvate: step 2/4. Its function is as follows. Involved in the biosynthesis of branched-chain amino acids (BCAA). Catalyzes an alkyl-migration followed by a ketol-acid reduction of (S)-2-acetolactate (S2AL) to yield (R)-2,3-dihydroxy-isovalerate. In the isomerase reaction, S2AL is rearranged via a Mg-dependent methyl migration to produce 3-hydroxy-3-methyl-2-ketobutyrate (HMKB). In the reductase reaction, this 2-ketoacid undergoes a metal-dependent reduction by NADPH to yield (R)-2,3-dihydroxy-isovalerate. This is Ketol-acid reductoisomerase (NADP(+)) from Pseudarthrobacter chlorophenolicus (strain ATCC 700700 / DSM 12829 / CIP 107037 / JCM 12360 / KCTC 9906 / NCIMB 13794 / A6) (Arthrobacter chlorophenolicus).